An 847-amino-acid chain; its full sequence is B-cell receptor CD22 (847 aa).

A signal peptide spans 1–19 (MHLLGPWLLLLVLEYLAFS). Residues 20–138 (DSSKWAFEHP…MERIHLNVSE (119 aa)) enclose the Ig-like V-type domain. Over 20 to 687 (DSSKWAFEHP…YYSPETIGRR (668 aa)) the chain is Extracellular. N-linked (GlcNAc...) asparagine glycans are attached at residues asparagine 67, asparagine 101, and asparagine 112. Residue arginine 120 coordinates N-acetylneuraminate. N-linked (GlcNAc...) asparagine glycosylation is found at asparagine 135, asparagine 164, and asparagine 231. 6 consecutive Ig-like C2-type domains span residues 143–235 (PHIQ…DTVQ), 242–326 (PKLE…VFLQ), 331–416 (PEPS…LDVQ), 419–500 (PKKV…VALN), 505–582 (PRDV…QTAS), and 593–676 (PRRL…STLT). Cysteine 161 and cysteine 219 are disulfide-bonded. 2 cysteine pairs are disulfide-bonded: cysteine 265-cysteine 309 and cysteine 353-cysteine 396. 5 N-linked (GlcNAc...) asparagine glycosylation sites follow: asparagine 363, asparagine 428, asparagine 445, asparagine 448, and asparagine 479. 2 disulfide bridges follow: cysteine 442/cysteine 484 and cysteine 529/cysteine 571. N-linked (GlcNAc...) asparagine glycans are attached at residues asparagine 574 and asparagine 634. A disulfide bridge connects residues cysteine 616 and cysteine 659. The helical transmembrane segment at 688 to 708 (VAVGFGSCLAILILAICGLKL) threads the bilayer. Residues 709 to 847 (QRRWKRTQSQ…ENVDYVILKH (139 aa)) lie on the Cytoplasmic side of the membrane. Phosphoserine is present on residues serine 725, serine 726, and serine 729. 2 short sequence motifs (ITIM motif) span residues 760 to 765 (ISYTTL) and 794 to 799 (VTYSVL). Residue tyrosine 762 is modified to Phosphotyrosine. A phosphotyrosine mark is found at tyrosine 807, tyrosine 822, and tyrosine 842. 2 consecutive short sequence motifs (ITIM motif) follow at residues 820 to 825 (IHYSEL) and 840 to 845 (VDYVIL).

This sequence belongs to the immunoglobulin superfamily. SIGLEC (sialic acid binding Ig-like lectin) family. Predominantly monomer of isoform CD22-beta. Also found as heterodimer of isoform CD22-beta and a shorter isoform. Interacts with PTPN6/SHP-1, LYN, SYK, PIK3R1/PIK3R2 and PLCG1 upon phosphorylation. Interacts with GRB2, INPP5D and SHC1 upon phosphorylation. May form a complex with INPP5D/SHIP, GRB2 and SHC1. In terms of processing, phosphorylation of Tyr-762, Tyr-807 and Tyr-822 are involved in binding to SYK, GRB2 and SYK, respectively. Phosphorylation of Tyr-842 is involved in binding to SYK, PLCG2 and PIK3R1/PIK3R2. Post-translationally, phosphorylated on tyrosine residues by LYN.

The protein localises to the cell membrane. Most highly expressed siglec (sialic acid-binding immunoglobulin-like lectin) on B-cells that plays a role in various aspects of B-cell biology including differentiation, antigen presentation, and trafficking to bone marrow. Binds to alpha 2,6-linked sialic acid residues of surface molecules such as CD22 itself, CD45 and IgM in a cis configuration. Can also bind to ligands on other cells as an adhesion molecule in a trans configuration. Acts as an inhibitory coreceptor on the surface of B-cells and inhibits B-cell receptor induced signaling, characterized by inhibition of the calcium mobilization and cellular activation. Mechanistically, the immunoreceptor tyrosine-based inhibitory motif domain is phosphorylated by the Src kinase LYN, which in turn leads to the recruitment of the protein tyrosine phosphatase 1/PTPN6, leading to the negative regulation of BCR signaling. If this negative signaling from is of sufficient strength, apoptosis of the B-cell can be induced. This Pan troglodytes (Chimpanzee) protein is B-cell receptor CD22.